The sequence spans 372 residues: UDP-N-acetylglucosamine--N-acetylmuramyl-(pentapeptide) pyrophosphoryl-undecaprenol N-acetylglucosamine transferase (372 aa).

Residues 21 to 23 (TAG), Asn-135, Arg-172, Ser-206, and Gln-303 contribute to the UDP-N-acetyl-alpha-D-glucosamine site.

This sequence belongs to the glycosyltransferase 28 family. MurG subfamily.

It is found in the cell membrane. The catalysed reaction is di-trans,octa-cis-undecaprenyl diphospho-N-acetyl-alpha-D-muramoyl-L-alanyl-D-glutamyl-meso-2,6-diaminopimeloyl-D-alanyl-D-alanine + UDP-N-acetyl-alpha-D-glucosamine = di-trans,octa-cis-undecaprenyl diphospho-[N-acetyl-alpha-D-glucosaminyl-(1-&gt;4)]-N-acetyl-alpha-D-muramoyl-L-alanyl-D-glutamyl-meso-2,6-diaminopimeloyl-D-alanyl-D-alanine + UDP + H(+). It functions in the pathway cell wall biogenesis; peptidoglycan biosynthesis. Its function is as follows. Cell wall formation. Catalyzes the transfer of a GlcNAc subunit on undecaprenyl-pyrophosphoryl-MurNAc-pentapeptide (lipid intermediate I) to form undecaprenyl-pyrophosphoryl-MurNAc-(pentapeptide)GlcNAc (lipid intermediate II). This is UDP-N-acetylglucosamine--N-acetylmuramyl-(pentapeptide) pyrophosphoryl-undecaprenol N-acetylglucosamine transferase from Paenarthrobacter aurescens (strain TC1).